The sequence spans 651 residues: Acetyl-coenzyme A synthetase (651 aa).

Residues 190-193 (RGGK), threonine 312, and asparagine 336 contribute to the CoA site. Residues 388 to 390 (GEP), 412 to 417 (DTWWQT), aspartate 501, and arginine 516 each bind ATP. Serine 524 is a binding site for CoA. Arginine 527 is a binding site for ATP. Mg(2+) is bound by residues valine 538, histidine 540, and valine 543. Residue arginine 585 participates in CoA binding. N6-acetyllysine is present on lysine 610.

This sequence belongs to the ATP-dependent AMP-binding enzyme family. The cofactor is Mg(2+). In terms of processing, acetylated. Deacetylation by the SIR2-homolog deacetylase activates the enzyme.

The catalysed reaction is acetate + ATP + CoA = acetyl-CoA + AMP + diphosphate. In terms of biological role, catalyzes the conversion of acetate into acetyl-CoA (AcCoA), an essential intermediate at the junction of anabolic and catabolic pathways. AcsA undergoes a two-step reaction. In the first half reaction, AcsA combines acetate with ATP to form acetyl-adenylate (AcAMP) intermediate. In the second half reaction, it can then transfer the acetyl group from AcAMP to the sulfhydryl group of CoA, forming the product AcCoA. The chain is Acetyl-coenzyme A synthetase from Mesorhizobium japonicum (strain LMG 29417 / CECT 9101 / MAFF 303099) (Mesorhizobium loti (strain MAFF 303099)).